Consider the following 235-residue polypeptide: Large ribosomal subunit protein uL1 (235 aa).

It belongs to the universal ribosomal protein uL1 family. In terms of assembly, part of the 50S ribosomal subunit.

Functionally, binds directly to 23S rRNA. The L1 stalk is quite mobile in the ribosome, and is involved in E site tRNA release. Its function is as follows. Protein L1 is also a translational repressor protein, it controls the translation of the L11 operon by binding to its mRNA. The sequence is that of Large ribosomal subunit protein uL1 from Mycobacterium leprae (strain Br4923).